A 278-amino-acid polypeptide reads, in one-letter code: Putative cysteine-rich repeat secretory protein 19 (278 aa).

Residues 1–32 form the signal peptide; it reads MYSSSSVSKRFVLVPIVVVVTTQLLLVRNVSS. Gnk2-homologous domains follow at residues 39–147 and 160–267; these read YLHH…SLDT and PSAK…LYPF.

This sequence belongs to the cysteine-rich repeat secretory protein family.

The protein localises to the secreted. In Arabidopsis thaliana (Mouse-ear cress), this protein is Putative cysteine-rich repeat secretory protein 19 (CRRSP19).